Consider the following 247-residue polypeptide: ATP synthase subunit a, chloroplastic (247 aa).

5 helical membrane passes run 38–58, 95–115, 134–154, 199–219, and 220–240; these read QVLITSWVVIAILLGSATLAV, VPFIGTMFLFIFVSNWSGALL, INTTVALALLTSVAYFYAGLT, LVVVVLVSLVPSVVPIPVMFL, and GLFTSGIQALIFATLAAAYIG.

This sequence belongs to the ATPase A chain family. F-type ATPases have 2 components, CF(1) - the catalytic core - and CF(0) - the membrane proton channel. CF(1) has five subunits: alpha(3), beta(3), gamma(1), delta(1), epsilon(1). CF(0) has four main subunits: a, b, b' and c.

It localises to the plastid. Its subcellular location is the chloroplast thylakoid membrane. Functionally, key component of the proton channel; it plays a direct role in the translocation of protons across the membrane. In Jasminum nudiflorum (Winter jasmine), this protein is ATP synthase subunit a, chloroplastic.